The chain runs to 264 residues: Octanoyltransferase (264 aa).

Residues 74–262 (GTASELVWLV…AFESVFGPRQ (189 aa)) enclose the BPL/LPL catalytic domain. Substrate-binding positions include 113–120 (RGGEYTYH), 193–195 (AIG), and 206–208 (GIA). Cys-224 acts as the Acyl-thioester intermediate in catalysis.

This sequence belongs to the LipB family.

It is found in the cytoplasm. It carries out the reaction octanoyl-[ACP] + L-lysyl-[protein] = N(6)-octanoyl-L-lysyl-[protein] + holo-[ACP] + H(+). The protein operates within protein modification; protein lipoylation via endogenous pathway; protein N(6)-(lipoyl)lysine from octanoyl-[acyl-carrier-protein]: step 1/2. Functionally, catalyzes the transfer of endogenously produced octanoic acid from octanoyl-acyl-carrier-protein onto the lipoyl domains of lipoate-dependent enzymes. Lipoyl-ACP can also act as a substrate although octanoyl-ACP is likely to be the physiological substrate. The protein is Octanoyltransferase of Brucella melitensis biotype 1 (strain ATCC 23456 / CCUG 17765 / NCTC 10094 / 16M).